A 634-amino-acid chain; its full sequence is Acetylcholinesterase (634 aa).

Positions 1–23 (MKTSDILLLPTVLLTFLFHNCFA) are cleaved as a signal peptide. A disulfide bridge connects residues Cys91 and Cys118. Residues Asn133 and Asn184 are each glycosylated (N-linked (GlcNAc...) asparagine). The Acyl-ester intermediate role is filled by Ser225. An intrachain disulfide couples Cys279 to Cys290. Asn283 carries an N-linked (GlcNAc...) asparagine glycan. The active-site Charge relay system is the Glu352. N-linked (GlcNAc...) asparagine glycosylation occurs at Asn368. The cysteines at positions 427 and 580 are disulfide-linked. Catalysis depends on His495, which acts as the Charge relay system. N-linked (GlcNAc...) asparagine glycans are attached at residues Asn512 and Asn592.

It belongs to the type-B carboxylesterase/lipase family. Dimers and collagen-tailed forms, in which catalytic tetramers are associated with anchoring proteins that attach them to the basal lamina or to cell membranes. In the collagen-tailed forms, subunits are associated with a specific collagen, COLQ, which triggers the formation of isoform T tetramers from dimers.

The protein resides in the synapse. Its subcellular location is the secreted. It localises to the cell membrane. The enzyme catalyses acetylcholine + H2O = choline + acetate + H(+). In terms of biological role, terminates signal transduction at the neuromuscular junction by rapid hydrolysis of the acetylcholine released into the synaptic cleft. This Danio rerio (Zebrafish) protein is Acetylcholinesterase (ache).